We begin with the raw amino-acid sequence, 177 residues long: Alpha-crystallin A chain (177 aa).

Methionine 1 bears the N-acetylmethionine mark. The 111-residue stretch at 52 to 162 (VFRNFLDSGI…NWQDRPIPVS (111 aa)) folds into the sHSP domain. Histidine 100 and glutamate 102 together coordinate Zn(2+). An intrachain disulfide couples cysteine 131 to cysteine 142. Residues 146–177 (TRPGDDSNWQDRPIPVSREEKQGTQPEIRADP) form a disordered region. An O-linked (GlcNAc) serine glycan is attached at serine 162. Positions 162-177 (SREEKQGTQPEIRADP) are enriched in basic and acidic residues.

Belongs to the small heat shock protein (HSP20) family. Heteropolymer composed of three CRYAA and one CRYAB subunits. Inter-subunit bridging via zinc ions enhances stability, which is crucial as there is no protein turn over in the lens. Can also form homodimers and homotetramers (dimers of dimers) which serve as the building blocks of homooligomers.

The protein localises to the cytoplasm. It localises to the nucleus. Functionally, contributes to the transparency and refractive index of the lens. May act as a chaperone, preventing aggregation of various proteins under a wide range of stress conditions. The protein is Alpha-crystallin A chain (cryaa) of Squalus acanthias (Spiny dogfish).